A 380-amino-acid chain; its full sequence is Cytochrome b (380 aa).

Helical transmembrane passes span 33 to 53 (FGSL…FLAM), 77 to 98 (WLIR…YLHI), 113 to 133 (WTIG…GYVL), and 178 to 198 (FFAF…IHLL). Residues His-83 and His-97 each coordinate heme b. His-182 and His-196 together coordinate heme b. His-201 contributes to the a ubiquinone binding site. 4 helical membrane passes run 226 to 246 (YKDL…ALFS), 288 to 308 (LGGV…PFLH), 320 to 340 (VTQF…WIGG), and 347 to 367 (FVII…VLIP).

It belongs to the cytochrome b family. In terms of assembly, the cytochrome bc1 complex contains 3 respiratory subunits (MT-CYB, CYC1 and UQCRFS1), 2 core proteins (UQCRC1 and UQCRC2) and probably 6 low-molecular weight proteins. Requires heme b as cofactor.

The protein resides in the mitochondrion inner membrane. Component of the ubiquinol-cytochrome c reductase complex (complex III or cytochrome b-c1 complex) that is part of the mitochondrial respiratory chain. The b-c1 complex mediates electron transfer from ubiquinol to cytochrome c. Contributes to the generation of a proton gradient across the mitochondrial membrane that is then used for ATP synthesis. This Kareius bicoloratus (Stone flounder) protein is Cytochrome b (mt-cyb).